The primary structure comprises 140 residues: Protein KRTCAP2 homolog (140 aa).

4 helical membrane passes run 11-31 (LLSSIISGILSLVIFATLRFC), 40-60 (LNVLVGGYLFSWLFILSLTCV), 74-94 (AKLVPEILFCLSLTVAAAGIV), and 98-118 (CATTSVLFSLVGLYFLNRISI).

The protein belongs to the KRTCAP2 family. In terms of assembly, component of the oligosaccharyltransferase (OST) complex.

It localises to the membrane. Functionally, subunit of the oligosaccharyl transferase (OST) complex that catalyzes the initial transfer of a defined glycan (Glc(3)Man(9)GlcNAc(2) in eukaryotes) from the lipid carrier dolichol-pyrophosphate to an asparagine residue within an Asn-X-Ser/Thr consensus motif in nascent polypeptide chains, the first step in protein N-glycosylation. N-glycosylation occurs cotranslationally and the complex associates with the Sec61 complex at the channel-forming translocon complex that mediates protein translocation across the endoplasmic reticulum (ER). All subunits are required for a maximal enzyme activity. The sequence is that of Protein KRTCAP2 homolog from Drosophila pseudoobscura pseudoobscura (Fruit fly).